The chain runs to 865 residues: MKDFYARVTVMVTGLCFVGTVTNPSRKSSLSLHQQDGDLLANWSSTRHTSQKTDTVDRNSYFFRVLFQPHTKERHTNHLDRTNHRLSKVTLSCLAHLRALEMLNLGDDVIHSLCLDLSLPSSSRQKRHRSRFRGRHPRLKVLLLQRNQLGPTPKGLWKLKPLCSLDLSFNRRVGIGLSGFHGCLQLKSIYLKNNKILTIHPEAFKGLKKLQVVDLRSSALTMLVPIVTIALEWPNLELGLADNQWQCNESDANFQNIASVSWGEIWKAVCNTPVENEKPYVEASQIRISRDIHLPRSPSSDLQSLIQSKAEKPRAGMDVHLSALEKKAQVGYGDLKGIWLQSPMELRDSQGGPVTDRKDDKPPDLALAVCLSVFITFVVAFCLGAFARPYIDRLRQQRCLNKRPGSENAYSNEGFHDDVEAAQHVQHQGTDLCQTTHHLNLFENQDPSWGTEAIPHGAVLSERMLGSNGMDPSSQQSPGQFEDSGEARSGDGNMFPNGRVVHPAVHGLPSADAQKPISPGQHHYDVPEESLYDTVAQEYSLLDNAMDRSSVAGCLGTFPNSINSGRDELCPSQPRDVVASFSKTLAHMSTREAEESVERGFPEPLGAMGSQIESSEERQVSNSIRELATQQASFQEVDVEERLAHVYSEALYNDTPSHMPRHSSGHDVASATEEAVQRDASFDPHDDLVTNYESDSDEGSLFTLSSEGSQDTRSLTEEQAFVESGGDSQPLPSRNLGEYKDSVTSAESVEDITSQQTLEKREAQEAHLGNTLISGPDSCVHETHLENDSSPLDPENVPTWTQPPDHKLAHHETLGTFVYGDIGPQSEAVDWLYSLRDLEFPNIDSSPSPPCSDQDPSDPEEHDTK.

Residues 4-24 (FYARVTVMVTGLCFVGTVTNP) form a helical membrane-spanning segment. Asparagine 42 carries an N-linked (GlcNAc...) asparagine glycan. 5 LRR repeats span residues 138-160 (RLKV…WKLK), 161-182 (PLCS…GFHG), 185-206 (QLKS…AFKG), 209-230 (KLQV…VTIA), and 235-255 (NLEL…ANFQ). N-linked (GlcNAc...) asparagine glycosylation is present at asparagine 248. The chain crosses the membrane as a helical span at residues 366-386 (ALAVCLSVFITFVVAFCLGAF). Disordered stretches follow at residues 463-522 (RMLG…PGQH) and 654-749 (DTPS…AESV). Over residues 470 to 479 (MDPSSQQSPG) the composition is skewed to polar residues. Positions 675-688 (AVQRDASFDPHDDL) are enriched in basic and acidic residues. The segment covering 702-713 (FTLSSEGSQDTR) has biased composition (polar residues). Phosphoserine is present on residues serine 714 and serine 748. Residues 728–759 (SQPLPSRNLGEYKDSVTSAESVEDITSQQTLE) form the LRRNT domain. An N-linked (GlcNAc...) asparagine glycan is attached at asparagine 787. The segment at 840–865 (FPNIDSSPSPPCSDQDPSDPEEHDTK) is disordered. Residues 855–865 (DPSDPEEHDTK) are compositionally biased toward acidic residues.

It is found in the membrane. In Rattus norvegicus (Rat), this protein is Leucine-rich repeat-containing protein 66 (Lrrc66).